The sequence spans 628 residues: Putative serine esterase Mb1866c (628 aa).

Serine 156 (acyl-ester intermediate) is an active-site residue. Active-site charge relay system residues include aspartate 322 and histidine 350.

The protein belongs to the CocE/NonD hydrolase family.

The chain is Putative serine esterase Mb1866c from Mycobacterium bovis (strain ATCC BAA-935 / AF2122/97).